Consider the following 549-residue polypeptide: Chaperonin GroEL (549 aa).

Residues 30-33 (TLGP), Lys51, 87-91 (DGTTT), Gly415, and Asp496 contribute to the ATP site.

The protein belongs to the chaperonin (HSP60) family. In terms of assembly, forms a cylinder of 14 subunits composed of two heptameric rings stacked back-to-back. Interacts with the co-chaperonin GroES.

The protein resides in the cytoplasm. It catalyses the reaction ATP + H2O + a folded polypeptide = ADP + phosphate + an unfolded polypeptide.. In terms of biological role, together with its co-chaperonin GroES, plays an essential role in assisting protein folding. The GroEL-GroES system forms a nano-cage that allows encapsulation of the non-native substrate proteins and provides a physical environment optimized to promote and accelerate protein folding. In Prosthecochloris aestuarii (strain DSM 271 / SK 413), this protein is Chaperonin GroEL.